The following is a 240-amino-acid chain: MSSVGPLEDEAAGTELGGSPADPATLTEIDPSAIQVRKTRTVVKLDCERLVSKKGLPYLLKNAPKHARISKRRDTYGNLCHVLQFYQLWAHELYPKAKFKDFVALCDRLGKTDRQLRAYRMQLIREELGLAAEGLDPPPQPLREHTGAGGSQPAGSVAQDTNTNADLSDDDLLYTTSRAAAASSTANPVPRSETPAALAGVDEAELLAQLAEMQRAAEEDVHESEDDEQLALMREMDEFM.

3 disordered regions span residues 1-28 (MSSV…TLTE), 132-169 (AEGL…DLSD), and 213-240 (MQRA…DEFM). Residues 220 to 229 (DVHESEDDEQ) show a composition bias toward acidic residues.

This sequence belongs to the CSM3 family. In terms of assembly, component of the fork protection complex (FPC) consisting of TOF1 and CSM3.

Its subcellular location is the nucleus. Its function is as follows. Forms a fork protection complex (FPC) with TOF1 and which is required for chromosome segregation during meiosis and DNA damage repair. FPC coordinates leading and lagging strand synthesis and moves with the replication fork. FPC stabilizes replication forks in a configuration that is recognized by replication checkpoint sensors. The polypeptide is Chromosome segregation in meiosis protein 3 (CSM3) (Eremothecium gossypii (strain ATCC 10895 / CBS 109.51 / FGSC 9923 / NRRL Y-1056) (Yeast)).